Reading from the N-terminus, the 70-residue chain is MKFPLLFISLALAAFLTRVQDADSSVISKEKSVRDGEEFPCAGTMADCRGLADNSVCCDTGKCIGEVCYY.

The N-terminal stretch at 1–21 (MKFPLLFISLALAAFLTRVQD) is a signal peptide. A propeptide spanning residues 22–33 (ADSSVISKEKSV) is cleaved from the precursor. 3 cysteine pairs are disulfide-bonded: Cys41–Cys58, Cys48–Cys63, and Cys57–Cys68.

As to expression, expressed by the venom duct.

The protein resides in the secreted. This chain is Conotoxin Cl6.13, found in Californiconus californicus (California cone).